Consider the following 290-residue polypeptide: Arginine N-acetyltransferase avaD (290 aa).

157 to 163 (NQAHFEA) provides a ligand contact to acetyl-CoA.

The protein belongs to the acetyltransferase family. GCN5 subfamily.

It functions in the pathway secondary metabolite metabolism. Its function is as follows. Arginine N-acetyltransferase; part of the cluster that mediates the biosynthesis of a highly modified cyclo-arginine-tryptophan dipeptide (cRW). Within the pathway, avaD catalyzes the N-acetylation of the guanidine group. The first step of the pathway is perfornmed by the arginine-containing cyclodipeptide synthase (RCPDS) avaA that acts as the scaffold-generating enzyme and is responsible for formation of the cyclo-Arg-Trp (cRW) diketopiperazine. AvaB then acts as a multifunctional flavoenzyme that is responsible for generating the cyclo-Arg-formylkynurenine DKP, which can be deformylated by avaC. AvaB then further catalyzes an additional N-oxidation followed by cyclization and dehydration. The next step is an N-acetylation of the guanidine group catalyzed by the arginine N-acetyltransferase avaD. The roles of the additional enzymes identified within the ava cluster still have to be determined. This chain is Arginine N-acetyltransferase avaD, found in Aspergillus versicolor.